An 87-amino-acid polypeptide reads, in one-letter code: Large ribosomal subunit protein bL28 (87 aa).

It belongs to the bacterial ribosomal protein bL28 family.

This is Large ribosomal subunit protein bL28 from Methylacidiphilum infernorum (isolate V4) (Methylokorus infernorum (strain V4)).